The following is a 398-amino-acid chain: Phosphoglycerate kinase (398 aa).

Substrate is bound by residues 21–23 (DFN), Arg-36, 59–62 (HLGR), Arg-119, and Arg-157. ATP contacts are provided by residues Lys-208, Gly-296, Glu-327, and 354–357 (GGDS).

It belongs to the phosphoglycerate kinase family. In terms of assembly, monomer.

The protein localises to the cytoplasm. The enzyme catalyses (2R)-3-phosphoglycerate + ATP = (2R)-3-phospho-glyceroyl phosphate + ADP. It participates in carbohydrate degradation; glycolysis; pyruvate from D-glyceraldehyde 3-phosphate: step 2/5. The sequence is that of Phosphoglycerate kinase from Streptococcus pyogenes serotype M5 (strain Manfredo).